A 218-amino-acid polypeptide reads, in one-letter code: Octanoyltransferase (218 aa).

A BPL/LPL catalytic domain is found at 32–218; that stretch reads GEAAEAIWLL…LRTFPQHFPD (187 aa). Substrate-binding positions include 71-78, 151-153, and 164-166; these read RGGQYTYH, AIG, and GLS. Cys-182 functions as the Acyl-thioester intermediate in the catalytic mechanism.

The protein belongs to the LipB family.

It is found in the cytoplasm. It carries out the reaction octanoyl-[ACP] + L-lysyl-[protein] = N(6)-octanoyl-L-lysyl-[protein] + holo-[ACP] + H(+). It participates in protein modification; protein lipoylation via endogenous pathway; protein N(6)-(lipoyl)lysine from octanoyl-[acyl-carrier-protein]: step 1/2. Its function is as follows. Catalyzes the transfer of endogenously produced octanoic acid from octanoyl-acyl-carrier-protein onto the lipoyl domains of lipoate-dependent enzymes. Lipoyl-ACP can also act as a substrate although octanoyl-ACP is likely to be the physiological substrate. The protein is Octanoyltransferase of Cereibacter sphaeroides (strain ATCC 17023 / DSM 158 / JCM 6121 / CCUG 31486 / LMG 2827 / NBRC 12203 / NCIMB 8253 / ATH 2.4.1.) (Rhodobacter sphaeroides).